We begin with the raw amino-acid sequence, 175 residues long: Inorganic pyrophosphatase (175 aa).

Substrate is bound by residues Lys-30, Arg-44, and Tyr-56. Residues Asp-66, Asp-71, and Asp-103 each coordinate Mg(2+). Tyr-142 serves as a coordination point for substrate.

The protein belongs to the PPase family. Homohexamer. Mg(2+) serves as cofactor.

The protein localises to the cytoplasm. It catalyses the reaction diphosphate + H2O = 2 phosphate + H(+). Functionally, catalyzes the hydrolysis of inorganic pyrophosphate (PPi) forming two phosphate ions. This is Inorganic pyrophosphatase from Haemophilus ducreyi (strain 35000HP / ATCC 700724).